We begin with the raw amino-acid sequence, 246 residues long: Ribonuclease 3 (246 aa).

In terms of domain architecture, RNase III spans 18 to 147 (FKELQKKIGI…FIGALYLDQG (130 aa)). Mg(2+) is bound at residue E60. Residue D64 is part of the active site. D133 and E136 together coordinate Mg(2+). Residue E136 is part of the active site. The DRBM domain occupies 173-242 (DFKSQLQELV…AQMALQKLKT (70 aa)).

It belongs to the ribonuclease III family. In terms of assembly, homodimer. Mg(2+) serves as cofactor.

It is found in the cytoplasm. It catalyses the reaction Endonucleolytic cleavage to 5'-phosphomonoester.. Its function is as follows. Digests double-stranded RNA. Involved in the processing of primary rRNA transcript to yield the immediate precursors to the large and small rRNAs (23S and 16S). Processes some mRNAs, and tRNAs when they are encoded in the rRNA operon. Processes pre-crRNA and tracrRNA of type II CRISPR loci if present in the organism. This is Ribonuclease 3 from Geobacillus sp. (strain WCH70).